The chain runs to 614 residues: MLQVLLVTICLAVFPYQGSSIILESGNVNDYEVVYPQKLTALLKGAIQQPEQKYEDAMQYEFKVNGKPVVLHLEKNKGLFSEDYSETHYSPDGREITTNPPVEDHCYYHGHIQNDAHLTASISACNGLKGHFQLRGETYLIEPLKIPDSEAHAVYKYENVEKEDEGPKKCGVTQTNWKSDEPIKASQFILTPEQRAYMNANKYIKLAIVVDNVMFRKYTGNFTAIRTRIYEIVNTLNLIYTILNIHIALVFLEIWSKGDSINVQSVVDVTLNSFGEWRERDLLNRKRHDNAQLLTGINFNGDTIGFGFVGSMCIPKKSVGIVQDHSKTHLLVATTMAHELGHNLGINHDGDSCTCQANSCIMAAKLSHQPSYQFSDCSINELWMYLISHTPRCILNEPLTTDVVSPAVCGNYVVEEGEECDCGSLWYCRNPCCDAATCKLKPGAECGDGVCCYQCRFVTAGTVCRPARSECDIPEYCSGQSVECPMDHIQKNGKPCLMNHGYCYNGRCPIMIHQCIALWGPGTTVSSDVCFQRNESGQGYSYCRRENNQNIPCAPQDVKCGRLYCKFHNVNTLPCNFKYSDFAPDYGLVDHGTKCGDGKVCNSNRQCVDVNTAY.

Residues 1 to 20 (MLQVLLVTICLAVFPYQGSS) form the signal peptide. Positions 21-192 (IILESGNVND…IKASQFILTP (172 aa)) are excised as a propeptide. A Cys-switch; controls maturation motif is present at residues 167 to 173 (PKKCGVT). The residue at position 193 (E193) is a Pyrrolidone carboxylic acid (Glu). Positions 202–398 (KYIKLAIVVD…HTPRCILNEP (197 aa)) constitute a Peptidase M12B domain. N221 carries N-linked (GlcNAc...) asparagine glycosylation. Intrachain disulfides connect C313–C393, C353–C377, and C355–C360. A Zn(2+)-binding site is contributed by H338. The Metal-binding motif lies at 338–349 (HELGHNLGINHD). E339 (proton acceptor) is an active-site residue. Zn(2+) contacts are provided by H342 and H348. The 87-residue stretch at 406 to 492 (PAVCGNYVVE…ECPMDHIQKN (87 aa)) folds into the Disintegrin domain. Ca(2+) contacts are provided by V408, N411, E415, E418, and D421. 14 disulfides stabilise this stretch: C409/C438, C420/C433, C422/C428, C432/C455, C446/C452, C451/C477, C464/C484, C471/C503, C496/C508, C515/C565, C530/C575, C543/C553, C560/C601, and C595/C607. Residues 470–472 (ECD) carry the D/ECD-tripeptide motif. Ca(2+)-binding residues include D472, E475, and D487. An N-linked (GlcNAc...) asparagine glycan is attached at N534.

The protein belongs to the venom metalloproteinase (M12B) family. P-III subfamily. P-IIIa sub-subfamily. Monomer. The cofactor is Zn(2+). N-glycosylated. In terms of processing, the N-terminus is blocked. As to expression, expressed by the venom gland (at protein level). Expressed by the venom gland.

Its subcellular location is the secreted. With respect to regulation, the alpha-fibrinogenase activity is inhibited by EDTA, but not by pefabloc. Functionally, zinc metalloprotease that has fibrinogenolytic activity. Does not have hemorrhagic activity in rats. Cleaves insulin B chain at '38-Ala-|-Leu-39' and '40-Tyr-|-Leu-41' bonds. Hydrolyzes only partially and weakly isolated extracellular matrix (ECM) bovine fibronectin and basal membrane (BM) protein human collagen IV in vitro. Murine laminin is not hydrolyzed, neither isolated nor in a solubilized BM preparation. Nidogen is hydrolyzed at '350-Ser-|-Phe-351' bond in a solubilized BM preparation. Hydrolyzes plasma proteins involved in blood coagulation in vitro. Has alpha-fibrinogenase activity cleaving human fibrinogen alpha chain at '432-Lys-|-Leu-433' bond, but does not cleave beta or gamma chains. Does not cleave fibrin. Hydrolyzes only partially bovine prothrombin at '200-Ser-|-Gly-201' bond, factor X (FX) heavy chain, and very slowly, FX light chain and plasminogen in vitro, without activating any of them. Has no effect in plasma thrombin generation. Does not inhibit platelet aggregation induced by collagen in vitro. May have a delayed pathological action as an anticoagulant in envenomed patients after they received serotherapy as it is not recognized by the venom antiserum. This is Zinc metalloproteinase-disintegrin-like protein F1 from Vipera ammodytes ammodytes (Western sand viper).